Consider the following 253-residue polypeptide: 3-deoxy-manno-octulosonate cytidylyltransferase (253 aa).

It belongs to the KdsB family.

The protein localises to the cytoplasm. The catalysed reaction is 3-deoxy-alpha-D-manno-oct-2-ulosonate + CTP = CMP-3-deoxy-beta-D-manno-octulosonate + diphosphate. Its pathway is nucleotide-sugar biosynthesis; CMP-3-deoxy-D-manno-octulosonate biosynthesis; CMP-3-deoxy-D-manno-octulosonate from 3-deoxy-D-manno-octulosonate and CTP: step 1/1. It participates in bacterial outer membrane biogenesis; lipopolysaccharide biosynthesis. Functionally, activates KDO (a required 8-carbon sugar) for incorporation into bacterial lipopolysaccharide in Gram-negative bacteria. This is 3-deoxy-manno-octulosonate cytidylyltransferase from Acidithiobacillus ferrooxidans (strain ATCC 23270 / DSM 14882 / CIP 104768 / NCIMB 8455) (Ferrobacillus ferrooxidans (strain ATCC 23270)).